We begin with the raw amino-acid sequence, 447 residues long: 2-oxoadipate dioxygenase/decarboxylase (447 aa).

His-68, Arg-72, and His-224 together coordinate 2-oxoadipate. Residue His-68 coordinates Fe(2+). Fe(2+) is bound by residues His-224 and Glu-290. Val-391 is a binding site for 2-oxoadipate.

Belongs to the 2-oxoadipate dioxygenase/decarboxylase family. Fe(2+) serves as cofactor.

The catalysed reaction is 2-oxoadipate + O2 = (R)-2-hydroxyglutarate + CO2. Catalyzes the decarboxylation and hydroxylation of 2-oxoadipate (2OA) to form D-2-hydroxyglutarate (D-2-HGA). The chain is 2-oxoadipate dioxygenase/decarboxylase from Shigella flexneri.